Consider the following 174-residue polypeptide: uncharacterized protein (174 aa).

This sequence belongs to the IIV-6 196R family.

This is an uncharacterized protein from Acheta domesticus (House cricket).